Here is a 1041-residue protein sequence, read N- to C-terminus: Desmoglein-4 (1041 aa).

The N-terminal stretch at 1 to 23 is a signal peptide; the sequence is MDWLLFRNICLLILFMVVLGVNS. A propeptide spanning residues 24 to 49 is cleaved from the precursor; the sequence is EFIVEVKELDIENGTTTWQTVRRQKR. Cadherin domains are found at residues 50–157, 158–269, 270–385, and 389–497; these read EWIK…PPVF, TQNV…FPIL, EKTS…GPTF, and SMTF…CPVI. Over 50–634 the chain is Extracellular; sequence EWIKFAAACR…RQSNVGLGPA (585 aa). Residue N110 is glycosylated (N-linked (GlcNAc...) asparagine). N545 carries an N-linked (GlcNAc...) asparagine glycan. A helical membrane pass occupies residues 635-655; that stretch reads GIGMIILGLLLLLLSPLLLLM. Residues 656–1041 are Cytoplasmic-facing; it reads CCCKRRQPEG…RYSNMHYSRQ (386 aa). 2 Desmoglein repeat repeats span residues 884 to 910 and 911 to 941; these read TLSE…IVTE and TYTT…ETVM. A disordered region spans residues 1014 to 1041; it reads ISQTTGSTSPMTSQHRVTRYSNMHYSRQ.

Interacts with JUP. Strongly expressed in the skin; during the anagen stage of hair follicles in the matrix, precortex and inner rooth sheath.

The protein localises to the cell membrane. It localises to the cell junction. It is found in the desmosome. Its function is as follows. A component of desmosome cell-cell junctions which are required for positive regulation of cellular adhesion. Coordinates the transition from proliferation to differentiation in hair follicle keratinocytes. Plays a role in moderating lymphocyte migration to inflamed skin and maintaining homeostasis of the epidermal inflammatory response. This is Desmoglein-4 (Dsg4) from Mus musculus (Mouse).